The primary structure comprises 1379 residues: DNA-directed RNA polymerase subunit beta'' (1379 aa).

Residues cysteine 220, cysteine 291, cysteine 298, and cysteine 301 each coordinate Zn(2+).

The protein belongs to the RNA polymerase beta' chain family. RpoC2 subfamily. In plastids the minimal PEP RNA polymerase catalytic core is composed of four subunits: alpha, beta, beta', and beta''. When a (nuclear-encoded) sigma factor is associated with the core the holoenzyme is formed, which can initiate transcription. Zn(2+) serves as cofactor.

Its subcellular location is the plastid. It carries out the reaction RNA(n) + a ribonucleoside 5'-triphosphate = RNA(n+1) + diphosphate. Its function is as follows. DNA-dependent RNA polymerase catalyzes the transcription of DNA into RNA using the four ribonucleoside triphosphates as substrates. This Cuscuta reflexa (Southern Asian dodder) protein is DNA-directed RNA polymerase subunit beta''.